The chain runs to 73 residues: Large ribosomal subunit protein uL24 (73 aa).

Residues 51-65 are compositionally biased toward basic and acidic residues; the sequence is DDNPKGGFIHKEKPM. The tract at residues 51–73 is disordered; it reads DDNPKGGFIHKEKPMHISNVKKA.

This sequence belongs to the universal ribosomal protein uL24 family. In terms of assembly, part of the 50S ribosomal subunit.

One of two assembly initiator proteins, it binds directly to the 5'-end of the 23S rRNA, where it nucleates assembly of the 50S subunit. Its function is as follows. One of the proteins that surrounds the polypeptide exit tunnel on the outside of the subunit. The chain is Large ribosomal subunit protein uL24 from Helicobacter pylori (strain Shi470).